Reading from the N-terminus, the 41-residue chain is Photosystem I reaction center subunit IX (41 aa).

Residues 7–27 (YLSTAPVVATGWFIVTAALLI) form a helical membrane-spanning segment.

This sequence belongs to the PsaJ family.

The protein resides in the plastid. Its subcellular location is the chloroplast thylakoid membrane. In terms of biological role, may help in the organization of the PsaE and PsaF subunits. The polypeptide is Photosystem I reaction center subunit IX (Tetradesmus obliquus (Green alga)).